We begin with the raw amino-acid sequence, 103 residues long: Large ribosomal subunit protein uL24 (103 aa).

It belongs to the universal ribosomal protein uL24 family. As to quaternary structure, part of the 50S ribosomal subunit.

Functionally, one of two assembly initiator proteins, it binds directly to the 5'-end of the 23S rRNA, where it nucleates assembly of the 50S subunit. One of the proteins that surrounds the polypeptide exit tunnel on the outside of the subunit. The polypeptide is Large ribosomal subunit protein uL24 (Halalkalibacterium halodurans (strain ATCC BAA-125 / DSM 18197 / FERM 7344 / JCM 9153 / C-125) (Bacillus halodurans)).